The following is a 68-amino-acid chain: U4-agatoxin-Ao1a (68 aa).

Residues 1–25 form the signal peptide; the sequence is MKKSTVIVLSLAAFVLLSVMQFSAA. Positions 26–36 are excised as a propeptide; the sequence is EDIKMEVEEQR. 4 disulfide bridges follow: cysteine 39-cysteine 52, cysteine 46-cysteine 57, cysteine 51-cysteine 66, and cysteine 59-cysteine 64.

Belongs to the neurotoxin 33 family. Expressed by the venom gland.

Its subcellular location is the secreted. In Agelena orientalis (Funnel-web spider), this protein is U4-agatoxin-Ao1a.